Reading from the N-terminus, the 653-residue chain is Large subunit GTPase 1 homolog (653 aa).

Residues 1-47 (MGKKRGTGLGRSLQRQRGSERRGASSWLHASEVVGESGPERRSAVEQ) form a disordered region. A CP-type G domain is found at 155 to 439 (WRQLWRVIER…LCDCPGLVMP (285 aa)). Residue 203–206 (NKAD) coordinates GTP. The segment covering 248–275 (ADSVADDLSDSEEESSSQEEDVTAEDSA) has biased composition (acidic residues). Residues 248-323 (ADSVADDLSD…TCSEDEGGDK (76 aa)) are disordered. Residues 276–291 (ESTSTGSALQTENQCL) show a composition bias toward polar residues. Over residues 293-320 (SDDDSSDEYEDCEDEEEDDWQTCSEDEG) the composition is skewed to acidic residues. GTP is bound by residues 388–395 (GYPNVGKS) and 432–435 (DCPG). The disordered stretch occupies residues 621-653 (APSAGSVVGKPWKKHGNRNKKEKVRRITKHLEN). Residues 631–653 (PWKKHGNRNKKEKVRRITKHLEN) are compositionally biased toward basic residues.

The protein belongs to the TRAFAC class YlqF/YawG GTPase family. LSG1 subfamily.

It is found in the cytoplasm. The protein localises to the endoplasmic reticulum. It localises to the nucleus. Its subcellular location is the cajal body. It catalyses the reaction GTP + H2O = GDP + phosphate + H(+). Its function is as follows. GTPase required for the XPO1/CRM1-mediated nuclear export of the 60S ribosomal subunit. Probably acts by mediating the release of NMD3 from the 60S ribosomal subunit after export into the cytoplasm. In terms of biological role, functions as a GTPase. May act by mediating the release of NMD3 from the 60S ribosomal subunit after export into the cytoplasm during the 60S ribosomal subunit maturation. In Gallus gallus (Chicken), this protein is Large subunit GTPase 1 homolog.